The sequence spans 49 residues: uncharacterized protein (49 aa).

This is an uncharacterized protein from Archaeoglobus fulgidus (strain ATCC 49558 / DSM 4304 / JCM 9628 / NBRC 100126 / VC-16).